The chain runs to 511 residues: Archaeal glutamate synthase [NADPH] (511 aa).

2 consecutive 4Fe-4S ferredoxin-type domains span residues 15–44 (FMIERRQDRCIRCRVCERQCGFNVHWYDEE) and 46–75 (DMMREDEMKCVGCQRCAVMCPTNALVVKPH). [4Fe-4S] cluster contacts are provided by C24, C27, C30, C34, C55, C58, C61, and C65.

The protein belongs to the glutamate synthase family. Requires FMN as cofactor.

The catalysed reaction is 2 L-glutamate + NADP(+) = L-glutamine + 2-oxoglutarate + NADPH + H(+). This chain is Archaeal glutamate synthase [NADPH], found in Archaeoglobus fulgidus (strain ATCC 49558 / DSM 4304 / JCM 9628 / NBRC 100126 / VC-16).